Reading from the N-terminus, the 223-residue chain is Zinc-finger homeodomain protein 12 (223 aa).

Polar residues predominate over residues 1 to 20 (MSSLSKPNRQFLSPTTNNQD). The interval 1–24 (MSSLSKPNRQFLSPTTNNQDTGRE) is disordered. The segment at 37-88 (YNECLKNHAVSLGGHALDGCGEFTPKSTTILTDPPSLRCDACGCHRNFHRRS) adopts a ZF-HD dimerization-type; degenerate zinc-finger fold. The segment at residues 147 to 204 (KKHKRTKFTAEQKVKMRGFAERAGWKINGWDEKWVREFCSEVGIERKVLKVWIHNNKY) is a DNA-binding region (homeobox; atypical).

Homo- and heterodimer with other ZFHD proteins. Interacts with ZHD11.

Its subcellular location is the nucleus. Its function is as follows. Putative transcription factor. The chain is Zinc-finger homeodomain protein 12 (ZHD12) from Arabidopsis thaliana (Mouse-ear cress).